We begin with the raw amino-acid sequence, 49 residues long: Small, acid-soluble spore protein O (49 aa).

The interval 1 to 49 (MGKRKANHTISGMNAASAQGQGTGYNEEFANEPLTPAERQNNKKRKKNQ) is disordered. A compositionally biased stretch (polar residues) spans 8–20 (HTISGMNAASAQG).

It belongs to the SspO family.

The protein resides in the spore core. The sequence is that of Small, acid-soluble spore protein O from Bacillus cereus (strain B4264).